The sequence spans 554 residues: Flavin-dependent halogenase ascD (554 aa).

FAD contacts are provided by glycine 15, glycine 18, and glutamate 48. Serine 331 and glycine 332 together coordinate chloride. Valine 333 provides a ligand contact to FAD.

It belongs to the flavin-dependent halogenase family.

The catalysed reaction is ilicicolin B + FADH2 + chloride + O2 = ilicicolin A + FAD + 2 H2O + H(+). It participates in secondary metabolite biosynthesis; terpenoid biosynthesis. Flavin-dependent halogenase; part of the asc-1 gene cluster that mediates the biosynthesis of both ascochlorin and ascofuranone, a strong inhibitor of cyanide-insensitive alternative oxidases and a promising drug candidate against African trypanosomiasis. The first step in the pathway is performed by the non-reducing polyketide synthase ascC that produces orsellinic acid by condensing acetyl-CoA with 3 malonyl-CoA units. Orsellinic acid is then prenylated by the prenyltransferase ascA to yield ilicicolinic acid B. Ilicicolinic acid B is further reduced to ilicicolin B by the reductase ascB. The halogenase ascD then chlorinates ilicicolin B to produce ilicicolin A which is converted to ilicicolin A epoxide by the cytochrome P450 monooxygenase ascE that catalyzes stereoselective epoxidation of the terminal double bond of the prenyl group. Ilicicolin A epoxide is the last common precursor for the biosynthesis of ascofuranone and ascochlorin. The terpene cyclase ascF produces a monocyclic terpene, and the cyclization reaction is proposed to be initiated by protonation of the terminal epoxide of ilicicolin A epoxide to generate a monocyclic tertiarycation, which is followed by a series of hydride and methyl shifts with abstraction of proton, leading to the formation of the (14S,15R,19R)-trimethylcyclohexanone ring structure of ilicicolin C, which is finally reduced to ascochlorin by the dehydrogenase ascG. On the other hand, ilicicolin A epoxide is hydroxylated by the cytochrome P450 monooxygenase ascH, and the resultant product is cyclized by the terpene cyclase ascI to ascofuranol via protonation-initiated epoxide ring opening, which facilitates the 6-endo-tet cyclization to form the tetrahy-drofuran ring. Finally, ascofuranol is oxidized into ascofuranone by ascJ. This Acremonium egyptiacum (Oospora egyptiaca) protein is Flavin-dependent halogenase ascD.